The chain runs to 326 residues: ELAV-like protein 1 (326 aa).

RRM domains are found at residues 20–98 (TNLI…VARP), 106–186 (ANLY…FAAN), and 244–322 (WCIF…FKTS).

This sequence belongs to the RRM elav family. Interacts (via RRM3) with cirbp. Unable to form oligomers. Part of a ribonucleoprotein (RNP) complex, at least composed of elavl1/elrA and/or elavl2/elrB, igf2bp3/vg1RBP, ddx6/Xp54, ybx2/frgy2, lsm14b/rap55b and, in a subset of RNP complexes, stau1/staufen.

Its subcellular location is the cytoplasm. The protein resides in the cell cortex. RNA-binding protein that binds to the 3'-UTR region of mRNAs and increases their stability. Involved in embryonic stem cells (ESCs) differentiation: preferentially binds mRNAs that are not methylated by N6-methyladenosine (m6A), stabilizing them, promoting ESCs differentiation. Binds to poly-U elements and AU-rich elements (AREs) in the 3'-UTR of target mRNAs. Acts cooperatively with cribp to stabilize AU-rich sequence (ARE)-containing mRNAs. May play a role during gastrulation. Required for the vegetal localization of vg1 mRNA. The sequence is that of ELAV-like protein 1 from Xenopus tropicalis (Western clawed frog).